The following is a 288-amino-acid chain: MIGPISQINISGGLSEKETSSLISNEELKNIITQLETDISDGSWFHKNYSRMDVEVMPALVIQANNKYPEMNLNLVTSPLDLSIEIKNVIENGVRSSRFIINMGEGGIHFSVIDYKHINGKTSLILFEPANFNSMGPAMLAIRTKTAIERYQLPDCHFSMVEMDIQRSSSECGIFSFALAKKLYIERDSLLKIHEDNIKGILSDGENPLPHDKLDPYLPVTFYKHTQGKKRLNEYLNTNPQGVGTVVNKKNETIVNRFDNNKSIVDGKELSVSVHKKRIAEYKTLLKV.

Active-site residues include histidine 109 and glutamate 128. Histidine 109 contacts CoA. CoA is bound at residue 167–168 (RS). Cysteine 172 is a catalytic residue. 1D-myo-inositol hexakisphosphate is bound by residues 182–185 (KLYI) and 224–225 (KH). 227–230 (QGKK) is a CoA binding site. 1D-myo-inositol hexakisphosphate is bound at residue arginine 257. 266 to 270 (DGKEL) contacts CoA.

It belongs to the acetyltransferase YopJ family. It depends on 1D-myo-inositol hexakisphosphate as a cofactor.

Its subcellular location is the secreted. It carries out the reaction L-threonyl-[protein] + acetyl-CoA = O-acetyl-L-threonyl-[protein] + CoA. The catalysed reaction is L-seryl-[protein] + acetyl-CoA = O-acetyl-L-seryl-[protein] + CoA. 1D-myo-inositol hexakisphosphate activates protein-acetyltransferase activity via an allosteric mechanism: 1D-myo-inositol hexakisphosphate-binding induces a conformational rearrangement that stimulates the interaction with acetyl-CoA. Functionally, serine/threonine-protein acetyltransferase translocated into infected cells, which inhibits the host immune response and induces cell death by mediating acetylation of target proteins. Inhibits the MAPK and NF-kappa-B signaling pathways by acetylating protein-kinases such as MAP2K1, MAP2K6, MAP3K7/TAK1 and I-kappa-B kinase (CHUK/IKKA and IKBKB) on serine and threonine residues critical for their activation by phosphorylation, thereby preventing protein-kinase activation. Promotes pyroptosis, a programmed cell death, in host cells by mediating acetylation of MAP3K7/TAK1: MAP3K7/TAK1 inactivation triggers activation of caspase-8 (CASP8), followed by CASP8-dependent cleavage of gasdermin-D (GSDMD) and induction of pyroptosis. Also able to induce intestinal barrier dysfunction by acetylating and inhibiting host protein-kinases RIPK2/RICK and MAP3K7/TAK1, thereby promoting cell death. The protein is Serine/threonine-protein acetyltransferase YopJ of Yersinia pseudotuberculosis serotype I (strain IP32953).